The sequence spans 159 residues: Ribosomal RNA large subunit methyltransferase H (159 aa).

Residues L76, G108, and 127 to 132 (FGLLTL) each bind S-adenosyl-L-methionine.

Belongs to the RNA methyltransferase RlmH family. Homodimer.

It is found in the cytoplasm. The enzyme catalyses pseudouridine(1915) in 23S rRNA + S-adenosyl-L-methionine = N(3)-methylpseudouridine(1915) in 23S rRNA + S-adenosyl-L-homocysteine + H(+). In terms of biological role, specifically methylates the pseudouridine at position 1915 (m3Psi1915) in 23S rRNA. This is Ribosomal RNA large subunit methyltransferase H from Streptococcus pyogenes serotype M3 (strain SSI-1).